The sequence spans 369 residues: N-methyltransferase imqF (369 aa).

The protein belongs to the methyltransferase superfamily.

It participates in secondary metabolite biosynthesis. N-methyltransferase; part of the gene cluster that mediates the biosynthesis of imizoquins A to D, tripeptide-derived alkaloids that serve a protective role against oxidative stress that are essential for normal germination. ImqB is a canonical three-module NRPS that assembles the tripeptide backbone of the imizoquins via condensation of Trp, Tyr, and Leu-derived precursors. N-methylation by imqF and phenol oxidation by imqC, followed by cyclization via the FAD-dependent oxidase imqH carry out the three-step transformation of L-tyrosine into tetrahydroisoquinoline. Importantly, this sequence requires the presence of a free amine in the tyrosine moiety, indicating that isoquinoline formation occurs prior to peptide bond formation. The imidazolidin-4-one ring of imizoquins could form following additional oxidation of the methyl-derived bridgehead carbon by imqH. Lastly, O-methylation by imqG and leucine hydroxylation by imqE complete biosynthesis of the imizoquins. The sequence is that of N-methyltransferase imqF from Aspergillus flavus (strain ATCC 200026 / FGSC A1120 / IAM 13836 / NRRL 3357 / JCM 12722 / SRRC 167).